The primary structure comprises 545 residues: Glucose-6-phosphate isomerase 1 (545 aa).

Catalysis depends on E356, which acts as the Proton donor. Active-site residues include H387 and K508.

Belongs to the GPI family.

The protein resides in the cytoplasm. It catalyses the reaction alpha-D-glucose 6-phosphate = beta-D-fructose 6-phosphate. It participates in carbohydrate biosynthesis; gluconeogenesis. Its pathway is carbohydrate degradation; glycolysis; D-glyceraldehyde 3-phosphate and glycerone phosphate from D-glucose: step 2/4. Functionally, catalyzes the reversible isomerization of glucose-6-phosphate to fructose-6-phosphate. In Cupriavidus pinatubonensis (strain JMP 134 / LMG 1197) (Cupriavidus necator (strain JMP 134)), this protein is Glucose-6-phosphate isomerase 1.